The primary structure comprises 918 residues: Cap-specific mRNA (nucleoside-2'-O-)-methyltransferase 1 (918 aa).

Positions 1–18 (MADRKSDEGEDEYQHKEQ) are enriched in basic and acidic residues. Disordered regions lie at residues 1–56 (MADR…EERA) and 62–81 (KRGY…EEEP). Residues 19–30 (MVTNRTSSFQPK) are compositionally biased toward polar residues. Over residues 43 to 56 (RAADRREEFMEERA) the composition is skewed to basic and acidic residues. Residues 68–80 (GDDEEDDFTAEEE) are compositionally biased toward acidic residues. One can recognise a G-patch domain in the interval 86 to 132 (PLTVAERLMAAMGHKAGEGLGKHGQGISEPIASSTQRGRTGLGHNAG). Residues 236 to 465 (FFQNRAAMKT…ERYITCKGLR (230 aa)) enclose the RrmJ-type SAM-dependent 2'-O-MTase domain. Residues Gly298 and Asp379 each contribute to the S-adenosyl-L-methionine site. Lys419 acts as the Proton acceptor in catalysis.

It carries out the reaction a 5'-end (N(7)-methyl 5'-triphosphoguanosine)-ribonucleoside in mRNA + S-adenosyl-L-methionine = a 5'-end (N(7)-methyl 5'-triphosphoguanosine)-(2'-O-methyl-ribonucleoside) in mRNA + S-adenosyl-L-homocysteine + H(+). In terms of biological role, S-adenosyl-L-methionine-dependent methyltransferase that mediates mRNA cap1 2'-O-ribose methylation to the 5'-cap structure of mRNAs. Methylates the ribose of the first nucleotide of a m(7)GpppG-capped mRNA to produce m(7)GpppNmp (cap1). Cap1 modification is linked to higher levels of translation. The protein is Cap-specific mRNA (nucleoside-2'-O-)-methyltransferase 1 of Caenorhabditis elegans.